The chain runs to 252 residues: 3-dehydroquinate dehydratase (252 aa).

3-dehydroquinate contacts are provided by residues serine 21, 46 to 48, and arginine 82; that span reads EWR. Residue histidine 143 is the Proton donor/acceptor of the active site. Residue lysine 170 is the Schiff-base intermediate with substrate of the active site. 3-dehydroquinate contacts are provided by arginine 213, serine 232, and glutamine 236.

It belongs to the type-I 3-dehydroquinase family. In terms of assembly, homodimer.

It catalyses the reaction 3-dehydroquinate = 3-dehydroshikimate + H2O. The protein operates within metabolic intermediate biosynthesis; chorismate biosynthesis; chorismate from D-erythrose 4-phosphate and phosphoenolpyruvate: step 3/7. Functionally, involved in the third step of the chorismate pathway, which leads to the biosynthesis of aromatic amino acids. Catalyzes the cis-dehydration of 3-dehydroquinate (DHQ) and introduces the first double bond of the aromatic ring to yield 3-dehydroshikimate. This is 3-dehydroquinate dehydratase from Salmonella paratyphi A (strain ATCC 9150 / SARB42).